A 248-amino-acid chain; its full sequence is Probable transcriptional regulatory protein BOV_1660 (248 aa).

This sequence belongs to the TACO1 family.

It localises to the cytoplasm. The polypeptide is Probable transcriptional regulatory protein BOV_1660 (Brucella ovis (strain ATCC 25840 / 63/290 / NCTC 10512)).